Here is a 170-residue protein sequence, read N- to C-terminus: Crossover junction endodeoxyribonuclease RuvC (170 aa).

Active-site residues include D8, E67, and D139. Mg(2+)-binding residues include D8, E67, and D139.

The protein belongs to the RuvC family. Homodimer which binds Holliday junction (HJ) DNA. The HJ becomes 2-fold symmetrical on binding to RuvC with unstacked arms; it has a different conformation from HJ DNA in complex with RuvA. In the full resolvosome a probable DNA-RuvA(4)-RuvB(12)-RuvC(2) complex forms which resolves the HJ. Mg(2+) is required as a cofactor.

It is found in the cytoplasm. The enzyme catalyses Endonucleolytic cleavage at a junction such as a reciprocal single-stranded crossover between two homologous DNA duplexes (Holliday junction).. Functionally, the RuvA-RuvB-RuvC complex processes Holliday junction (HJ) DNA during genetic recombination and DNA repair. Endonuclease that resolves HJ intermediates. Cleaves cruciform DNA by making single-stranded nicks across the HJ at symmetrical positions within the homologous arms, yielding a 5'-phosphate and a 3'-hydroxyl group; requires a central core of homology in the junction. The consensus cleavage sequence is 5'-(A/T)TT(C/G)-3'. Cleavage occurs on the 3'-side of the TT dinucleotide at the point of strand exchange. HJ branch migration catalyzed by RuvA-RuvB allows RuvC to scan DNA until it finds its consensus sequence, where it cleaves and resolves the cruciform DNA. In Pectobacterium atrosepticum (strain SCRI 1043 / ATCC BAA-672) (Erwinia carotovora subsp. atroseptica), this protein is Crossover junction endodeoxyribonuclease RuvC.